The primary structure comprises 315 residues: Acetyl-coenzyme A carboxylase carboxyl transferase subunit alpha (315 aa).

One can recognise a CoA carboxyltransferase C-terminal domain in the interval 32-289 (EIDLLEASLE…KQAFVDQLEQ (258 aa)).

This sequence belongs to the AccA family. In terms of assembly, acetyl-CoA carboxylase is a heterohexamer composed of biotin carboxyl carrier protein (AccB), biotin carboxylase (AccC) and two subunits each of ACCase subunit alpha (AccA) and ACCase subunit beta (AccD).

The protein resides in the cytoplasm. It carries out the reaction N(6)-carboxybiotinyl-L-lysyl-[protein] + acetyl-CoA = N(6)-biotinyl-L-lysyl-[protein] + malonyl-CoA. It participates in lipid metabolism; malonyl-CoA biosynthesis; malonyl-CoA from acetyl-CoA: step 1/1. Component of the acetyl coenzyme A carboxylase (ACC) complex. First, biotin carboxylase catalyzes the carboxylation of biotin on its carrier protein (BCCP) and then the CO(2) group is transferred by the carboxyltransferase to acetyl-CoA to form malonyl-CoA. This Staphylococcus haemolyticus (strain JCSC1435) protein is Acetyl-coenzyme A carboxylase carboxyl transferase subunit alpha.